We begin with the raw amino-acid sequence, 262 residues long: NAC domain-containing protein 71 (262 aa).

An NAC domain is found at 6–160 (LPPGFRFHPT…AFALCRVVKK (155 aa)). A DNA-binding region spans residues 107–166 (AGYRKTLVFYEGRAPLGDRTNWFMHEYRLCDIDDHSQKSPNFKGAFALCRVVKKNELKKN).

The protein localises to the nucleus. Its function is as follows. Transcription factor involved in tissue reunion of wounded inflorescence stems. Required for the division of pith cells in the reunion process, which is dependent on polar-transported auxin and the wound-inducible hormones ethylene and jasmonate. Binds to the promoters of XTH19 and XTH20 to induce their expression via auxin signaling. XTH19 and XTH20 are involved in cell proliferation in the tissue reunion process of incised stems. Involved in hypocotyl graft union formation. Required for the auxin- mediated promotion of vascular tissue proliferation during hypocotyl graft attachment. The protein is NAC domain-containing protein 71 of Arabidopsis thaliana (Mouse-ear cress).